Reading from the N-terminus, the 542-residue chain is Trans-alpha-bergamotene synthase (542 aa).

D295, D299, D439, T443, and E447 together coordinate Mg(2+). The DDXXD motif motif lies at 295 to 299; it reads DDFYD.

This sequence belongs to the terpene synthase family. It depends on Mg(2+) as a cofactor.

It carries out the reaction (2E,6E)-farnesyl diphosphate = (1S,5S,6R)-alpha-bergamotene + diphosphate. It participates in secondary metabolite biosynthesis; terpenoid biosynthesis. Its function is as follows. Sesquiterpene synthase converting farnesyl diphosphate to trans-alpha-bergamotene as the major product. The sequence is that of Trans-alpha-bergamotene synthase from Phyla dulcis (Aztec sweet herb).